The sequence spans 211 residues: Large ribosomal subunit protein bL17c (211 aa).

A chloroplast-targeting transit peptide spans 1–95 (MAIPMSMAMA…IVDGGGRIYA (95 aa)).

It belongs to the bacterial ribosomal protein bL17 family. Part of the 50S ribosomal subunit.

The protein resides in the plastid. It is found in the chloroplast. This protein binds directly to 23S ribosomal RNA. In Arabidopsis thaliana (Mouse-ear cress), this protein is Large ribosomal subunit protein bL17c (RPL17).